A 401-amino-acid chain; its full sequence is Probable acid ceramidase (401 aa).

The first 22 residues, 1-22 (MKPVAISLSLLLLVTLLPGSEQ), serve as a signal peptide directing secretion. N-linked (GlcNAc...) asparagine glycosylation is found at N101, N303, and N371.

It belongs to the acid ceramidase family.

The enzyme catalyses an N-acyl-sphingoid base + H2O = a sphingoid base + a fatty acid. It carries out the reaction an N-acylsphing-4-enine + H2O = sphing-4-enine + a fatty acid. The catalysed reaction is an N-acyl-15-methylhexadecasphing-4-enine + H2O = 15-methylhexadecasphing-4-enine + a fatty acid. Its function is as follows. Catalyzes the hydrolysis of ceramides into sphingoid base and free fatty acid. C.elegans contain specific sphingoid bases, which are unique or different in structure compared to the sphingoid bases found in other animals. Two examples of these distinctive compounds are: 15-methylhexadecasphinganine and 15-methylhexadecasphing-4-enine. This is Probable acid ceramidase from Caenorhabditis elegans.